The chain runs to 438 residues: uncharacterized protein (438 aa).

Histidine 59 is a Zn(2+) binding site. Residue glutamate 62 is the Proton acceptor of the active site. Residues histidine 63 and glutamate 139 each coordinate Zn(2+).

The protein belongs to the peptidase M16 family. The cofactor is Zn(2+).

This is an uncharacterized protein from Mycobacterium tuberculosis (strain CDC 1551 / Oshkosh).